A 264-amino-acid chain; its full sequence is 3-methyl-2-oxobutanoate hydroxymethyltransferase (264 aa).

Positions 45 and 84 each coordinate Mg(2+). 3-methyl-2-oxobutanoate contacts are provided by residues 45–46 (DS), aspartate 84, and lysine 113. Position 115 (glutamate 115) interacts with Mg(2+). The active-site Proton acceptor is the glutamate 182.

Belongs to the PanB family. In terms of assembly, homodecamer; pentamer of dimers. Mg(2+) is required as a cofactor.

Its subcellular location is the cytoplasm. It catalyses the reaction 3-methyl-2-oxobutanoate + (6R)-5,10-methylene-5,6,7,8-tetrahydrofolate + H2O = 2-dehydropantoate + (6S)-5,6,7,8-tetrahydrofolate. Its pathway is cofactor biosynthesis; (R)-pantothenate biosynthesis; (R)-pantoate from 3-methyl-2-oxobutanoate: step 1/2. Catalyzes the reversible reaction in which hydroxymethyl group from 5,10-methylenetetrahydrofolate is transferred onto alpha-ketoisovalerate to form ketopantoate. In Helicobacter hepaticus (strain ATCC 51449 / 3B1), this protein is 3-methyl-2-oxobutanoate hydroxymethyltransferase.